The sequence spans 454 residues: Inner membrane transport protein YajR (454 aa).

The Periplasmic segment spans residues 1 to 14 (MNDYKMTPGERRAT). The chain crosses the membrane as a helical span at residues 15-35 (WGLGTVFSLRMLGMFMVLPVL). Over 36-47 (TTYGMALQGASE) the chain is Cytoplasmic. A helical membrane pass occupies residues 48–68 (ALIGIAIGIYGLTQAVFQIPF). At 69 to 84 (GLLSDRIGRKPLIVGG) the chain is on the periplasmic side. A helical transmembrane segment spans residues 85–105 (LAVFAAGSVIAALSDSIWGII). The Cytoplasmic segment spans residues 106–137 (LGRALQGSGAIAAAVMALLSDLTREQNRTKAM). A helical transmembrane segment spans residues 138 to 158 (AFIGVSFGITFAIAMVLGPII). The Periplasmic segment spans residues 159–165 (THKLGLH). The helical transmembrane segment at 166–186 (ALFWMIAILATTGIALTIWVV) threads the bilayer. Topologically, residues 187–216 (PNSSTHVLNRESGMVKGSFSKVLAEPRLLK) are cytoplasmic. Residues 217–237 (LNFGIMCLHILLMSTFVALPG) traverse the membrane as a helical segment. Residues 238-252 (QLADAGFPAAEHWKV) are Periplasmic-facing. The helical transmembrane segment at 253-273 (YLATMLIAFGSVVPFIIYAEV) threads the bilayer. The Cytoplasmic portion of the chain corresponds to 274-279 (KRKMKQ). A helical membrane pass occupies residues 280-300 (VFVFCVGLIVVAEIVLWNAQT). The Periplasmic segment spans residues 301–306 (QFWQLV). The chain crosses the membrane as a helical span at residues 307–327 (VGVQLFFVAFNLMEALLPSLI). Topologically, residues 328 to 340 (SKESPAGYKGTAM) are cytoplasmic. A helical transmembrane segment spans residues 341 to 361 (GVYSTSQFLGVAIGGSLGGWI). At 362–363 (NG) the chain is on the periplasmic side. Residues 364-384 (MFDGQGVFLAGAMLAAVWLTV) form a helical membrane-spanning segment. At 385 to 454 (ASTMKEPPYV…FEIEQAIRQA (70 aa)) the chain is on the cytoplasmic side.

It belongs to the major facilitator superfamily.

The protein resides in the cell inner membrane. This Escherichia coli (strain K12) protein is Inner membrane transport protein YajR (yajR).